The following is a 453-amino-acid chain: Glucose N-acetyltransferase 1-B (453 aa).

Topologically, residues Met-1 to Tyr-8 are cytoplasmic. The chain crosses the membrane as a helical; Signal-anchor for type II membrane protein span at residues Leu-9–Phe-29. Residues Gln-30 to Asn-453 are Lumenal-facing. N-linked (GlcNAc...) asparagine glycans are attached at residues Asn-108, Asn-126, and Asn-176. The short motif at Asp-187 to Asp-189 is the DXD element.

This sequence belongs to the GNT1 family.

The protein resides in the golgi apparatus membrane. Its subcellular location is the vacuole membrane. Functionally, N-acetylglucosaminyltransferase involved in the Golgi-specific modification of N-linked glycans. In Kluyveromyces lactis (strain ATCC 8585 / CBS 2359 / DSM 70799 / NBRC 1267 / NRRL Y-1140 / WM37) (Yeast), this protein is Glucose N-acetyltransferase 1-B (GNT1-B).